Consider the following 390-residue polypeptide: Spore development regulator vosA (390 aa).

The Velvet domain maps to 3 to 132; it reads NNTSSDFDLI…ADQGVKLRIR (130 aa). Over residues 137-149 the composition is skewed to basic and acidic residues; it reads TMLKRSTRPDEFH. Disordered regions lie at residues 137 to 191 and 265 to 390; these read TMLK…PVKR and QASA…GTPQ. The segment covering 165–175 has biased composition (low complexity); sequence PPSSSYGGYPP. Positions 273 to 280 match the Nuclear localization signal motif; that stretch reads IPDPTGQS. Composition is skewed to polar residues over residues 350-364 and 371-390; these read QTPQANTPILPSQMV and SSVTGPTTFNHPDSPNGTPQ.

It belongs to the velvet family. VosA subfamily. In terms of assembly, forms a heterodimeric complex with velB; the formation of the velB-vosA complex is light-dependent. Interacts with velA, velB and velC.

It localises to the nucleus. In terms of biological role, component of the velB-VosA heterodimeric complex that plays a dual role in activating genes associated with spore maturation and repressing certain development-associated genes. The complex binds DNA through the DNA-binding domain of vosA that recognizes an 11-nucleotide consensus sequence 5'-CTGGCCGCGGC-3' consisting of two motifs in the promoters of key developmental regulatory genes. The polypeptide is Spore development regulator vosA (Penicillium rubens (strain ATCC 28089 / DSM 1075 / NRRL 1951 / Wisconsin 54-1255) (Penicillium chrysogenum)).